Consider the following 88-residue polypeptide: Small ribosomal subunit protein uS15 (88 aa).

It belongs to the universal ribosomal protein uS15 family. As to quaternary structure, part of the 30S ribosomal subunit. Forms a bridge to the 50S subunit in the 70S ribosome, contacting the 23S rRNA.

Its function is as follows. One of the primary rRNA binding proteins, it binds directly to 16S rRNA where it helps nucleate assembly of the platform of the 30S subunit by binding and bridging several RNA helices of the 16S rRNA. In terms of biological role, forms an intersubunit bridge (bridge B4) with the 23S rRNA of the 50S subunit in the ribosome. In Sorangium cellulosum (strain So ce56) (Polyangium cellulosum (strain So ce56)), this protein is Small ribosomal subunit protein uS15.